An 86-amino-acid chain; its full sequence is MDPYKVIVRPVVTEKAISMVERENKLTFIVDKRATKPDIKKAVETVYEVKVDKVNIVITMKGEKKAYVKLKPEYSASEVAARIGLF.

This sequence belongs to the universal ribosomal protein uL23 family. In terms of assembly, part of the 50S ribosomal subunit. Contacts protein L29.

Functionally, binds to 23S rRNA. One of the proteins that surrounds the polypeptide exit tunnel on the outside of the ribosome. This chain is Large ribosomal subunit protein uL23, found in Thermococcus sibiricus (strain DSM 12597 / MM 739).